Here is a 100-residue protein sequence, read N- to C-terminus: ESAT-6-like protein EsxB (100 aa).

It belongs to the WXG100 family. CFP-10 subfamily. In terms of assembly, forms a tight 1:1 complex with EsxA.

The protein resides in the secreted. Functionally, a secreted protein that might play a role in virulence. Might serve as a chaperone to prevent uncontrolled membrane lysis by its partner EsxA. The sequence is that of ESAT-6-like protein EsxB (esxB) from Mycobacterium leprae (strain TN).